We begin with the raw amino-acid sequence, 401 residues long: Imidazolonepropionase (401 aa).

Fe(3+) contacts are provided by His-66 and His-68. Zn(2+) is bound by residues His-66 and His-68. Arg-75, Tyr-138, and His-171 together coordinate 4-imidazolone-5-propanoate. Position 138 (Tyr-138) interacts with N-formimidoyl-L-glutamate. Position 236 (His-236) interacts with Fe(3+). Residue His-236 coordinates Zn(2+). Gln-239 lines the 4-imidazolone-5-propanoate pocket. Asp-311 serves as a coordination point for Fe(3+). Asp-311 serves as a coordination point for Zn(2+). Asn-313 and Gly-315 together coordinate N-formimidoyl-L-glutamate. Thr-316 is a 4-imidazolone-5-propanoate binding site.

It belongs to the metallo-dependent hydrolases superfamily. HutI family. Zn(2+) serves as cofactor. Requires Fe(3+) as cofactor.

The protein resides in the cytoplasm. It catalyses the reaction 4-imidazolone-5-propanoate + H2O = N-formimidoyl-L-glutamate. It functions in the pathway amino-acid degradation; L-histidine degradation into L-glutamate; N-formimidoyl-L-glutamate from L-histidine: step 3/3. In terms of biological role, catalyzes the hydrolytic cleavage of the carbon-nitrogen bond in imidazolone-5-propanoate to yield N-formimidoyl-L-glutamate. It is the third step in the universal histidine degradation pathway. The chain is Imidazolonepropionase from Pseudomonas putida (strain ATCC 700007 / DSM 6899 / JCM 31910 / BCRC 17059 / LMG 24140 / F1).